The chain runs to 308 residues: MSWLEKILEKSNLVSSRKASIPEGVWTKCTSCEQVLYHAELERNLEVCPKCNHHMRMKARRRLETFLDEGERVELGTELEPQDKLKFKDSKRYKERISAAQKSSGEKDALIVMQGELLGMPLVACAFEFSFMGGSMGSVVGARFVKAVEAAIENNCALVCFSASGGARMQEALMSLMQMAKTSAALERLSDKGLPFISVLTDPTMGGVSASLAMLGDINIGEPKALIGFAGRRVIEQTVREDLPEGFQRSEFLLEHGAIDMIVDRREMRQRVGGLVAKLTNHKSPMVVSVNESPNEEPYSVPEADEKG.

Residues Val25–Pro294 form the CoA carboxyltransferase N-terminal domain. Cys29, Cys32, Cys48, and Cys51 together coordinate Zn(2+). The C4-type zinc-finger motif lies at Cys29–Cys51. The segment at Ser289–Gly308 is disordered.

The protein belongs to the AccD/PCCB family. Acetyl-CoA carboxylase is a heterohexamer composed of biotin carboxyl carrier protein (AccB), biotin carboxylase (AccC) and two subunits each of ACCase subunit alpha (AccA) and ACCase subunit beta (AccD). Requires Zn(2+) as cofactor.

It is found in the cytoplasm. The catalysed reaction is N(6)-carboxybiotinyl-L-lysyl-[protein] + acetyl-CoA = N(6)-biotinyl-L-lysyl-[protein] + malonyl-CoA. It functions in the pathway lipid metabolism; malonyl-CoA biosynthesis; malonyl-CoA from acetyl-CoA: step 1/1. In terms of biological role, component of the acetyl coenzyme A carboxylase (ACC) complex. Biotin carboxylase (BC) catalyzes the carboxylation of biotin on its carrier protein (BCCP) and then the CO(2) group is transferred by the transcarboxylase to acetyl-CoA to form malonyl-CoA. This Vibrio campbellii (strain ATCC BAA-1116) protein is Acetyl-coenzyme A carboxylase carboxyl transferase subunit beta 1.